The following is a 157-amino-acid chain: Transcriptional repressor NrdR (157 aa).

Positions 1–11 (MQCPSCQNTDS) are enriched in polar residues. The interval 1–21 (MQCPSCQNTDSRVLESRSADT) is disordered. The segment at 3–34 (CPSCQNTDSRVLESRSADTGKSVRRRRECLNC) is a zinc-finger region. Residues 49-139 (ITVIKRSESK…VYRQFNGIND (91 aa)) form the ATP-cone domain.

Belongs to the NrdR family. Zn(2+) is required as a cofactor.

Negatively regulates transcription of bacterial ribonucleotide reductase nrd genes and operons by binding to NrdR-boxes. This is Transcriptional repressor NrdR from Prochlorococcus marinus (strain MIT 9211).